A 69-amino-acid chain; its full sequence is Arabinogalactan protein 24 (69 aa).

Positions 1-25 (MMMMTKMFVQIAVVCLLATMAVVSA) are cleaved as a signal peptide. Residues proline 34, proline 36, proline 38, and proline 40 each carry the 4-hydroxyproline modification. 4 O-linked (Ara...) hydroxyproline glycosylation sites follow: proline 34, proline 36, proline 38, and proline 40. The GPI-anchor amidated serine moiety is linked to residue serine 42. Residues 43-69 (SSTVVSATNMFTVLAIAAVALVVGSNH) constitute a propeptide, removed in mature form.

This sequence belongs to the AG-peptide AGP family. Contains 4-hydroxyproline; hydroxylated on Pro-34, Pro-36, Pro-38 and Pro-40. In terms of processing, O-glycosylated on hydroxyprolines; noncontiguous hydroxylproline residues are glycosylated with arabinogalactan.

It localises to the cell membrane. Functionally, proteoglycan that seems to be implicated in diverse developmental roles such as differentiation, cell-cell recognition, embryogenesis and programmed cell death. The protein is Arabinogalactan protein 24 of Arabidopsis thaliana (Mouse-ear cress).